The chain runs to 141 residues: Large ribosomal subunit protein uL11 (141 aa).

It belongs to the universal ribosomal protein uL11 family. As to quaternary structure, part of the ribosomal stalk of the 50S ribosomal subunit. Interacts with L10 and the large rRNA to form the base of the stalk. L10 forms an elongated spine to which L12 dimers bind in a sequential fashion forming a multimeric L10(L12)X complex. In terms of processing, one or more lysine residues are methylated.

Its function is as follows. Forms part of the ribosomal stalk which helps the ribosome interact with GTP-bound translation factors. This Campylobacter jejuni subsp. jejuni serotype O:6 (strain 81116 / NCTC 11828) protein is Large ribosomal subunit protein uL11.